Reading from the N-terminus, the 471-residue chain is Siroheme synthase (471 aa).

Residues 1 to 203 (MDYLPLFADI…GDWESAEKTL (203 aa)) are precorrin-2 dehydrogenase /sirohydrochlorin ferrochelatase. NAD(+) is bound by residues 22-23 (EV) and 43-44 (KN). At S128 the chain carries Phosphoserine. A uroporphyrinogen-III C-methyltransferase region spans residues 215–471 (GEIILVGAGP…DTKSSLINLA (257 aa)). P224 contributes to the S-adenosyl-L-methionine binding site. The active-site Proton acceptor is the D247. K269 functions as the Proton donor in the catalytic mechanism. S-adenosyl-L-methionine-binding positions include 300 to 302 (GGD), I305, 330 to 331 (TA), M382, and A411.

This sequence in the N-terminal section; belongs to the precorrin-2 dehydrogenase / sirohydrochlorin ferrochelatase family. It in the C-terminal section; belongs to the precorrin methyltransferase family.

It carries out the reaction uroporphyrinogen III + 2 S-adenosyl-L-methionine = precorrin-2 + 2 S-adenosyl-L-homocysteine + H(+). It catalyses the reaction precorrin-2 + NAD(+) = sirohydrochlorin + NADH + 2 H(+). The catalysed reaction is siroheme + 2 H(+) = sirohydrochlorin + Fe(2+). The protein operates within cofactor biosynthesis; adenosylcobalamin biosynthesis; precorrin-2 from uroporphyrinogen III: step 1/1. It functions in the pathway cofactor biosynthesis; adenosylcobalamin biosynthesis; sirohydrochlorin from precorrin-2: step 1/1. It participates in porphyrin-containing compound metabolism; siroheme biosynthesis; precorrin-2 from uroporphyrinogen III: step 1/1. Its pathway is porphyrin-containing compound metabolism; siroheme biosynthesis; siroheme from sirohydrochlorin: step 1/1. The protein operates within porphyrin-containing compound metabolism; siroheme biosynthesis; sirohydrochlorin from precorrin-2: step 1/1. In terms of biological role, multifunctional enzyme that catalyzes the SAM-dependent methylations of uroporphyrinogen III at position C-2 and C-7 to form precorrin-2 via precorrin-1. Then it catalyzes the NAD-dependent ring dehydrogenation of precorrin-2 to yield sirohydrochlorin. Finally, it catalyzes the ferrochelation of sirohydrochlorin to yield siroheme. This is Siroheme synthase from Zymomonas mobilis subsp. mobilis (strain ATCC 31821 / ZM4 / CP4).